Here is a 5142-residue protein sequence, read N- to C-terminus: Protein piccolo (5142 aa).

A compositionally biased stretch (low complexity) spans 1–21; the sequence is MGNEASLEGEGLPEGLAAAAA. 2 disordered regions span residues 1 to 154 and 177 to 583; these read MGNE…SMMP and DLIS…PSQG. Basic and acidic residues-rich tracts occupy residues 114–125, 136–150, and 188–202; these read RTTDTFRSEQKL, KESK…EHKS, and ETTK…EQGK. A compositionally biased stretch (polar residues) spans 232-244; it reads QDGTPKSISSQQP. Composition is skewed to pro residues over residues 298–317 and 352–371; these read LPSP…PPAQ and PVQP…PAKP. Residues 376-385 show a composition bias toward polar residues; that stretch reads TGSEKPSSEQ. Positions 397–555 are 10 X 10 AA tandem approximate repeats of P-A-K-P-Q-P-Q-Q-P-X; sequence VGKTPAQQPG…PAKPSAQQST (159 aa). Residues 467-493 show a composition bias toward pro residues; sequence TKPPSQLPGPAKPPPQQPGPAKPPPQQ. Positions 494 to 506 are enriched in low complexity; sequence PGSAKPPSQQPGS. The span at 507-522 shows a compositional bias: pro residues; the sequence is TKPPPQQPGPAKPSPQ. Residues 523-554 show a composition bias toward low complexity; the sequence is QPGSTKPPSQQPGSAKPSAQQPSPAKPSAQQS. Residues 589-613 form a C4-type zinc finger; it reads CPLCNTTELLLHVPEKANFNTCTEC. Disordered regions lie at residues 650–929 and 945–1058; these read LAPV…TVTG and LIST…PEST. Low complexity predominate over residues 673–683; the sequence is SKSSPQPQQTS. Composition is skewed to basic and acidic residues over residues 684 to 702 and 743 to 755; these read PKKD…EPKK and EQDK…DKPK. The span at 765–774 shows a compositional bias: polar residues; that stretch reads DLVSSSSATT. Residues 841-857 show a composition bias toward basic and acidic residues; that stretch reads KGQKQVDPVQKKEEPKK. A compositionally biased stretch (pro residues) spans 873–882; the sequence is KGSPTPPGPR. Over residues 889–927 the composition is skewed to polar residues; that stretch reads VPTPQQSPKPQEQSRRFSLNLGSITDAPKSQPTTPQETV. Ser-906 and Ser-918 each carry phosphoserine. At Thr-922 the chain carries Phosphothreonine. The span at 949 to 969 shows a compositional bias: low complexity; the sequence is AGQPGPHSQSGPGAPMKQAPA. Composition is skewed to basic and acidic residues over residues 996–1012 and 1019–1034; these read VKKE…EPKA and KRTE…KDSK. The C4-type zinc-finger motif lies at 1059–1082; that stretch reads CPLCKTELNIGSKDPPNFNTCTEC. 4 disordered regions span residues 1120–1163, 1183–1386, 1391–1410, and 1423–1868; these read GDIR…QEQE, EKIP…TDEK, GLKK…SDLA, and QAST…SDPE. The segment covering 1126–1139 has biased composition (pro residues); the sequence is PPAPSGPKASPMPV. 3 stretches are compositionally biased toward basic and acidic residues: residues 1193–1265, 1307–1318, and 1330–1347; these read QKQE…HDLL, PKEDDKTTKTIK, and DQVE…DKSD. Residues 1348 to 1358 are compositionally biased toward low complexity; that stretch reads TSSSQQPKSPQ. Ser-1356, Ser-1366, Ser-1367, Ser-1396, Ser-1398, Ser-1401, Ser-1402, and Ser-1405 each carry phosphoserine. Polar residues predominate over residues 1359–1374; it reads GLSDTGYSSDGISSSL. Residues 1398–1407 are compositionally biased toward low complexity; the sequence is SQESSPSSPS. Composition is skewed to basic and acidic residues over residues 1428-1451 and 1469-1510; these read ADEK…DQEK and KESQ…REPY. 8 positions are modified to phosphoserine: Ser-1516, Ser-1517, Ser-1519, Ser-1522, Ser-1546, Ser-1549, Ser-1570, and Ser-1572. Positions 1564–1576 are enriched in acidic residues; that stretch reads SADEDASGSEDDE. A Phosphothreonine modification is found at Thr-1617. 3 positions are modified to phosphoserine: Ser-1618, Ser-1628, and Ser-1640. A compositionally biased stretch (acidic residues) spans 1631 to 1640; that stretch reads DEDDEAFDES. Basic and acidic residues predominate over residues 1641 to 1652; it reads PELKYRETKSQE. A compositionally biased stretch (polar residues) spans 1671–1689; the sequence is ELNSTIADKYSAESSQKKT. Residues 1693–1703 are compositionally biased toward acidic residues; the sequence is FDEEPELEMES. Position 1703 is a phosphoserine (Ser-1703). Thr-1705 bears the Phosphothreonine mark. Ser-1707 and Ser-1712 each carry phosphoserine. Polar residues predominate over residues 1715 to 1732; sequence EGSSSLHASSFTPGTSPT. The segment covering 1772-1785 has biased composition (acidic residues); sequence DSSEEEELREEEEL. 2 positions are modified to phosphoserine: Ser-1773 and Ser-1774. The segment covering 1786–1799 has biased composition (basic and acidic residues); that stretch reads LKEQEKQREIEQQQ. Residue Thr-1825 is modified to Phosphothreonine. Ser-1831 carries the phosphoserine modification. The span at 1840–1855 shows a compositional bias: basic and acidic residues; sequence EELRQAAEMEELHRSS. Residues Ser-1860, Ser-1865, Ser-1873, and Ser-1894 each carry the phosphoserine modification. Disordered stretches follow at residues 2169–2192, 2365–2438, and 2504–2536; these read PSES…SSVC, ETFG…PTIL, and EPSK…PTGL. Low complexity-rich tracts occupy residues 2174–2192 and 2374–2387; these read TSVP…SSVC and SQLP…SSLP. 2 stretches are compositionally biased toward pro residues: residues 2404–2433 and 2506–2517; these read QPPP…PTSP and SKPPIAPKPVIP. The residue at position 2562 (Ser-2562) is a Phosphoserine. Phosphothreonine is present on Thr-3069. Disordered stretches follow at residues 3407 to 3508 and 3558 to 3626; these read EKQP…DKTK and KTYK…LYSP. Positions 3432–3441 are enriched in basic and acidic residues; that stretch reads DDPRSFKKIV. The residue at position 3443 (Ser-3443) is a Phosphoserine. Phosphothreonine occurs at positions 3447 and 3474. The span at 3474-3483 shows a compositional bias: acidic residues; sequence TDDEDQDEWD. Positions 3574 to 3585 are enriched in polar residues; the sequence is DTQSPQYLSATS. A phosphoserine mark is found at Ser-3577, Ser-3585, Ser-3615, Ser-3619, Ser-3625, Ser-3628, Ser-3631, Ser-3652, Ser-3678, Ser-3680, and Ser-3686. Disordered regions lie at residues 3652–3746 and 3833–3908; these read SPQK…MGTV and YMSD…QQSH. Polar residues-rich tracts occupy residues 3701–3716 and 3733–3745; these read EGYT…SSGA and STGT…TMGT. Ser-3835 bears the Phosphoserine mark. The segment covering 3845–3857 has biased composition (basic and acidic residues); the sequence is TRIESQHGIERPR. Residues 3859 to 3908 are compositionally biased toward polar residues; sequence APQTEFSQFIPPQTQTESQLVPPTSPYTQYQYSSPALPTQAPTSYTQQSH. Residues Ser-4088 and Ser-4204 each carry the phosphoserine modification. Residues 4278–4301 form a disordered region; it reads EADKPYSSGSRSRPSSRPSSVYGL. Residues 4282 to 4301 show a composition bias toward low complexity; the sequence is PYSSGSRSRPSSRPSSVYGL. Phosphoserine is present on residues Ser-4358, Ser-4362, Ser-4365, Ser-4394, and Ser-4430. The segment at 4389–4411 is disordered; sequence RDQFGSSHSLPEVQQHMREESRT. One can recognise a PDZ domain in the interval 4496–4590; sequence RIKITRDSKD…EAEICVRLDL (95 aa). Disordered stretches follow at residues 4597–4618 and 4645–4690; these read ENSQ…KSPG and EKGS…TKVV. Over residues 4598–4615 the composition is skewed to basic and acidic residues; that stretch reads NSQHLELHEPPKAVDKAK. The segment covering 4652–4673 has biased composition (low complexity); the sequence is SGPTSAGSSSVPSPGQPGSPSV. At Ser-4664 the chain carries Phosphoserine. Residues 4694-4823 form the C2 1 domain; sequence ITGEIQLQIN…SHLDNTPRWY (130 aa). Positions 4723 and 4729 each coordinate Ca(2+). Ser-4778 bears the Phosphoserine mark. Ca(2+) contacts are provided by Asp-4793, Asp-4795, Ser-4798, and Asp-4801. Disordered regions lie at residues 4830–4907 and 4930–4986; these read ESID…VTQT and PTKP…QNGQ. Low complexity-rich tracts occupy residues 4838–4853 and 4877–4887; these read HSSQ…SVIK and SSPGSSKSSSE. Positions 4895–4907 are enriched in polar residues; that stretch reads PSRSQSKTSVTQT. Positions 4941–4965 are enriched in low complexity; sequence SSVSTGSSGSSFGSGYSVDSEGSSS. The C2 2 domain maps to 5007–5132; that stretch reads VMGEIKIALK…DLRKRIVNWH (126 aa).

As to quaternary structure, interacts with BSN, ERC2/CAST1, RIMS1 and UNC13A. Interacts (via C-terminus) with TRIO (via N-terminus). Interacts with CTBP1. Interacts with SIAH1; this interaction negatively regulates SIAH1 E3 ligase activity. Directly interacts with GIT1 and GIT2. It depends on Ca(2+) as a cofactor. In terms of tissue distribution, moderately expressed in the developing cerebral cortex.

The protein localises to the presynaptic active zone. Functionally, scaffold protein of the presynaptic cytomatrix at the active zone (CAZ) which is the place in the synapse where neurotransmitter is released. After synthesis, participates in the formation of Golgi-derived membranous organelles termed Piccolo-Bassoon transport vesicles (PTVs) that are transported along axons to sites of nascent synaptic contacts. At the presynaptic active zone, regulates the spatial organization of synaptic vesicle cluster, the protein complexes that execute membrane fusion and compensatory endocytosis. Organizes as well the readily releasable pool of synaptic vesicles and safeguards a fraction of them to be not immediately available for action potential-induced release. Also functions in processes other than assembly such as the regulation of specific presynaptic protein ubiquitination by interacting with SIAH1 or the regulation of presynaptic autophagy. Also mediates synapse to nucleus communication leading to reconfiguration of gene expression by associating with the transcriptional corepressor CTBP1 and by subsequently reducing the size of its pool available for nuclear import. In Homo sapiens (Human), this protein is Protein piccolo.